An 831-amino-acid polypeptide reads, in one-letter code: MSPSLFRSEEVSLVQLYLPTESARPIMSALGELSTIHFKDLNPDVVAFQRSFVREIRRLTDTERLLRYLHSEIDLNGIHVPDHNLPPSYESVLESSTIEDIIERITRLEARVRQLVESSQLLEARYLQQLEFANVLTKADAFFSKSGNTVDPLRNNYETSSIFSGEDDTTAPLIENALELGTTGTFDSEETSPQMNTTLDFVSGIIPTVKFQFLERILWRTLRGNLFIHQVRADDSLIHGAEKNEEKTIFLVIAHGTQILLRIRKISESLGATLFPVEEDAPGRTSQIQQANVSISDLNAVLENTRSALYTELTFIAEHISAWEAVLHKDKTVFQVMNLFNYDQNHKCLIAEGWCPTANLPMVQKTLRNISDLTDSQAPTILNVVHTSEQPPTYFRVNKFTEGFQSIIDSYGIATYREVNHGIVAIVTFPFLFAIMFGDLGHGAIMASVALMFVLYEKTLGAKKDLDEIVGMVFYGRYIVLLMGLFSMYVGFVYNDLFSKPMSIFSSRWVWPVKSEEAIARAVQVGTYPIGIDPTWHSADNNLLFMNSYKMKLSIILGVIHMTFCLFLSLSNYRFFKRKLDIYAVFVPSLIFLEAIFGYLVITIVYKWCIDWKAKDLQPPSLLNMLILMFLSPGTLEDQLYPGQKYLQVGLVIAALICVPWLLIVKPFVLWRRHSNEENKYQSLNSDLPNVDEADALMAVDSQEKQAEPFELGEVVIHQVIHTIEFCLGCVSHTASYLRLWALSLAHNQLSSVLWNMTLANGFRMTGIVGSIFVVILFGFWFIATCVVLVAMEGTSAMLHSLRLHWVEGMSKHFEGEGYAFTPFTFKVTAE.

Over 1 to 418 (MSPSLFRSEE…DSYGIATYRE (418 aa)) the chain is Cytoplasmic. A helical transmembrane segment spans residues 419–437 (VNHGIVAIVTFPFLFAIMF). Over 438 to 439 (GD) the chain is Vacuolar. A helical transmembrane segment spans residues 440 to 456 (LGHGAIMASVALMFVLY). The Cytoplasmic segment spans residues 457-471 (EKTLGAKKDLDEIVG). Residues 472–501 (MVFYGRYIVLLMGLFSMYVGFVYNDLFSKP) traverse the membrane as a helical segment. Topologically, residues 502–548 (MSIFSSRWVWPVKSEEAIARAVQVGTYPIGIDPTWHSADNNLLFMNS) are vacuolar. The chain crosses the membrane as a helical span at residues 549-568 (YKMKLSIILGVIHMTFCLFL). Over 569-586 (SLSNYRFFKRKLDIYAVF) the chain is Cytoplasmic. The chain crosses the membrane as a helical span at residues 587-607 (VPSLIFLEAIFGYLVITIVYK). Residues 608-650 (WCIDWKAKDLQPPSLLNMLILMFLSPGTLEDQLYPGQKYLQVG) are Vacuolar-facing. A helical transmembrane segment spans residues 651–670 (LVIAALICVPWLLIVKPFVL). The Cytoplasmic segment spans residues 671–723 (WRRHSNEENKYQSLNSDLPNVDEADALMAVDSQEKQAEPFELGEVVIHQVIHT). A helical transmembrane segment spans residues 724–748 (IEFCLGCVSHTASYLRLWALSLAHN). Topologically, residues 749–769 (QLSSVLWNMTLANGFRMTGIV) are vacuolar. The helical transmembrane segment at 770 to 808 (GSIFVVILFGFWFIATCVVLVAMEGTSAMLHSLRLHWVE) threads the bilayer. At 809 to 831 (GMSKHFEGEGYAFTPFTFKVTAE) the chain is on the cytoplasmic side.

The protein belongs to the V-ATPase 116 kDa subunit family. V-ATPase is a heteromultimeric enzyme composed of a peripheral catalytic V1 complex (components A to H) attached to an integral membrane V0 proton pore complex (components: a, c, c', c'', d, e, f and VOA1).

It localises to the vacuole membrane. Subunit of the V0 complex of vacuolar(H+)-ATPase (V-ATPase), a multisubunit enzyme composed of a peripheral complex (V1) that hydrolyzes ATP and a membrane integral complex (V0) that translocates protons. V-ATPase is responsible for acidifying and maintaining the pH of intracellular compartments. This chain is V-type proton ATPase subunit a (vph1), found in Schizosaccharomyces pombe (strain 972 / ATCC 24843) (Fission yeast).